Here is a 363-residue protein sequence, read N- to C-terminus: MAP kinase kinase skh1/pek1 (363 aa).

The Protein kinase domain maps to I79–V343. ATP is bound by residues L85 to V93 and K108. The active-site Proton acceptor is the D206. At S234 the chain carries Phosphoserine. A Phosphothreonine modification is found at T238.

It belongs to the protein kinase superfamily. STE Ser/Thr protein kinase family. MAP kinase kinase subfamily.

The catalysed reaction is L-seryl-[protein] + ATP = O-phospho-L-seryl-[protein] + ADP + H(+). The enzyme catalyses L-threonyl-[protein] + ATP = O-phospho-L-threonyl-[protein] + ADP + H(+). It catalyses the reaction L-tyrosyl-[protein] + ATP = O-phospho-L-tyrosyl-[protein] + ADP + H(+). Its activity is regulated as follows. Activated by mkh1. Its function is as follows. Involved in the mkh1 signal transduction pathway that plays a role in cell wall integrity. Activates spm1/pmk1 via phosphorylation. The polypeptide is MAP kinase kinase skh1/pek1 (skh1) (Schizosaccharomyces pombe (strain 972 / ATCC 24843) (Fission yeast)).